The chain runs to 43 residues: Large ribosomal subunit protein uL5 (43 aa).

The protein belongs to the universal ribosomal protein uL5 family. Part of the 50S ribosomal subunit; part of the 5S rRNA/L5/L18/L25 subcomplex. Contacts the 5S rRNA and the P site tRNA. Forms a bridge to the 30S subunit in the 70S ribosome.

Its function is as follows. This is one of the proteins that bind and probably mediate the attachment of the 5S RNA into the large ribosomal subunit, where it forms part of the central protuberance. In the 70S ribosome it contacts protein S13 of the 30S subunit (bridge B1b), connecting the 2 subunits; this bridge is implicated in subunit movement. Contacts the P site tRNA; the 5S rRNA and some of its associated proteins might help stabilize positioning of ribosome-bound tRNAs. This Proteus vulgaris protein is Large ribosomal subunit protein uL5 (rplE).